The chain runs to 451 residues: Tubulin gamma-1 chain (451 aa).

Serine 131 bears the Phosphoserine; by BRSK1 mark. 142-148 (AGGTGSG) provides a ligand contact to GTP.

The protein belongs to the tubulin family. Component of the gamma-tubulin ring complex (gTuRC) consisting of TUBGCP2, TUBGCP3, TUBGCP4, TUBGCP5 and TUBGCP6 and gamma-tubulin TUBG1 or TUBG2. TUBGCP2, TUBGCP3, TUBGCP4, TUBGCP5 and TUBGCP6 assemble in a 5:5:2:1:1 stoichiometry; each is associated with a gamma-tubulin, thereby arranging 14 gamma-tubulins in a helical manner. Gamma-tubulin at the first position is blocked by TUBGCP3 at the last position, allowing 13 protafilaments to grow into a microtubule. The gTuRC (via TUBGCP3 and TUBGCP6) interacts with ACTB and MZT1; the interactions form a luminal bridge that stabilizes the initial structure during complex assembly. The gTuRC (via TUBGCP2) interacts with MZT2A/MZT2B and CDK5RAP2 (via CM1 motif); the interactions play a role in gTuRC activation. Interacts with alpha-beta tubulin heterodimers; the interaction allows microtubules to nucleate from the gTuRC. Interacts with B9D2. Interacts with CDK5RAP2; the interaction is leading to centrosomal localization of TUBG1 and CDK5RAP2. Interacts with CIMAP3. Interacts with SAS6 and NUP62 at the centrosome. Interacts with EML3 (phosphorylated at 'Thr-881') and HAUS8. Interacts with DNM2; this interaction may participate in centrosome cohesion. Interacts with CCDC66. Post-translationally, phosphorylation at Ser-131 by BRSK1 regulates centrosome duplication, possibly by mediating relocation of gamma-tubulin and its associated proteins from the cytoplasm to the centrosome.

It is found in the cytoplasm. It localises to the cytoskeleton. The protein localises to the microtubule organizing center. The protein resides in the centrosome. Its subcellular location is the spindle. In terms of biological role, tubulin is the major constituent of microtubules, protein filaments consisting of alpha- and beta-tubulin heterodimers. Gamma-tubulin is a key component of the gamma-tubulin ring complex (gTuRC) which mediates microtubule nucleation. The gTuRC regulates the minus-end nucleation of alpha-beta tubulin heterodimers that grow into microtubule protafilaments, a critical step in centrosome duplication and spindle formation. In Mus musculus (Mouse), this protein is Tubulin gamma-1 chain.